An 878-amino-acid chain; its full sequence is MEMPKDYNIEIEKQIQKKWEESKIYKFDEESNKPPYIIDTPPPYPTGRLHLGHALNWTYMDIIARYKRMKGFNVLFPQGWDCHGLPTEVKVEEIHGITKSDVDRHKFRELCIELTKENIEKMRRQIKSLGISIDWDKEYITMTPEYIKKSQTAFVRMYKDGLIYRGKFPVNWCPRCQTAIAFAEVEYKERESKLNYIKFPAADGEGHLLIATTRPELMAACVAILVHPEDERYKHLIGKEFIVPLFGHKVKLLADEDVEKEFGTGAVMVCTFGDKTDVLWVNRHKLEIKKAIDEKGELTEIAGKYKGLKTEEAREKIIEDLKKEGYLVKQEPIKQNVGVCWRCKTPIEIIVTEQWFVNVRKLIPKVREVADEIKWIPEHMKIRLLNWIEDMDWDWVISRQRIFATPIPVWYCPKCGNVVVAKEEDLPIDPTKTGYVCDKCGNKDLIPETDVLDTWMDSSITPMVITKWLDDDKFFEKHYPVQLRPQGHDIIRTWAFYTIVKSVALTGKKPWDEIVINGMVFGEDGHKMSKSRGNVVEPDEIIAKYGADALRLWASNSVVGDDVQFLWKEVDYGYRFLRKSWNACRFAKMHISDDIIDELKKPMEISNPIDLWILSKLQRLIERVDKDLENYRFNTIVEIYKFVWHEFCDNYIEMVKYRLYGDDEEAKKEARWTLYYVIDKVVRLLCPFAPHFSDYIAEIYKIDNLHFSFPEVDNRFINEEAEKFGEIAKNTVISIRRFKANSGMALNAPLKYVEIYTEDEETYLALNKTAEDIKGTLKIEELKIIKGKPALESKIVEIIPDKSKIGPEFKKNAKAVMDLIKNADEETLEKIINEGLETEYGVIRKEHIKDVKRALFCEGEEVDSVDIEGVLAMAIIRK.

Positions 43–53 match the 'HIGH' region motif; it reads PYPTGRLHLGH. Residues 527 to 531 carry the 'KMSKS' region motif; it reads KMSKS. Lys-530 contributes to the ATP binding site.

The protein belongs to the class-I aminoacyl-tRNA synthetase family. ValS type 2 subfamily.

The protein resides in the cytoplasm. The catalysed reaction is tRNA(Val) + L-valine + ATP = L-valyl-tRNA(Val) + AMP + diphosphate. Its function is as follows. Catalyzes the attachment of valine to tRNA(Val). As ValRS can inadvertently accommodate and process structurally similar amino acids such as threonine, to avoid such errors, it has a 'posttransfer' editing activity that hydrolyzes mischarged Thr-tRNA(Val) in a tRNA-dependent manner. The polypeptide is Valine--tRNA ligase (Methanocaldococcus jannaschii (strain ATCC 43067 / DSM 2661 / JAL-1 / JCM 10045 / NBRC 100440) (Methanococcus jannaschii)).